Consider the following 615-residue polypeptide: Sodium-coupled neutral amino acid transporter 9 homolog (615 aa).

Residues 1 to 165 (MPPFFAEFTE…LKDVSGKQGS (165 aa)) are Cytoplasmic-facing. The tract at residues 41–65 (VDDNDTDPLLDDEPPRRLPPAGGVP) is disordered. Positions 42 to 52 (DDNDTDPLLDD) are enriched in acidic residues. The chain crosses the membrane as a helical span at residues 166–186 (IVTIFSIWNTMMGTSLLAMPW). The tract at residues 175-180 (TMMGTS) is important for arginine binding and amino acid transport. Over 187–192 (ALQQAG) the chain is Lumenal. A helical membrane pass occupies residues 193-213 (LVLGIIIMLSMAAICFYTAYI). Over 214 to 246 (VIESPKRLQDLSVDPLLAEFSDVCKSLFGRIGE) the chain is Cytoplasmic. The helical transmembrane segment at 247–273 (YCAVVFSVCVLIGGVIVYWVLMSNFLY) threads the bilayer. Residues 274–341 (YTGAVVYESM…TGDDSWSFDK (68 aa)) are Lumenal-facing. N-linked (GlcNAc...) asparagine glycosylation is found at asparagine 286 and asparagine 295. A disulfide bridge links cysteine 304 with cysteine 478. A helical membrane pass occupies residues 342 to 358 (FWTLRGTVPIYLAFALF). Over 359–367 (PLMNFKSPT) the chain is Cytoplasmic. A helical transmembrane segment spans residues 368–392 (FFTKFNVLGTISVMYLLMFVFSKLL). Topologically, residues 393–413 (ECGVNMDFSNPKSIHYVQLAN) are lumenal. Residues 414–434 (MHFPALSGTLTLSYFIHNAVL) traverse the membrane as a helical segment. The Cytoplasmic portion of the chain corresponds to 435–451 (TILRNQKHPENNARDLS). Residues 452 to 472 (IGYCLVAFCYVFIGFTFFAAF) form a helical membrane-spanning segment. The Lumenal segment spans residues 473–491 (PVQRSCISDNFLNNFGAGD). The helical transmembrane segment at 492–512 (VLSSTARLFLLFQMITVLPLL) threads the bilayer. Topologically, residues 513–533 (MFLVRSQLFYAIFGQTWPGAI) are cytoplasmic. A helical transmembrane segment spans residues 534 to 554 (RVIILNVLLIAVAVGFATFYP). The Lumenal portion of the chain corresponds to 555 to 561 (NVGSILR). Residues 562 to 582 (YVGSISGLVYVFALPAMVYIK) traverse the membrane as a helical segment. Residues 583–594 (QSEAAGTLTPMK) lie on the Cytoplasmic side of the membrane. The chain crosses the membrane as a helical span at residues 595–615 (KYAHYGIIVIGVANLIAQFVI).

It belongs to the amino acid/polyamine transporter 2 family. SLC38A9 subfamily.

It is found in the lysosome membrane. It localises to the late endosome membrane. With respect to regulation, amino acid transport is sodium-dependent. Transport of leucine, tyrosine and phenylalanine is increased by arginine binding. Its function is as follows. Lysosomal amino acid transporter involved in the activation of mTORC1 in response to amino acid levels. Probably acts as an amino acid sensor of the Rag GTPases and Ragulator complexes, 2 complexes involved in amino acid sensing and activation of mTORC1, a signaling complex promoting cell growth in response to growth factors, energy levels, and amino acids. This chain is Sodium-coupled neutral amino acid transporter 9 homolog, found in Caenorhabditis elegans.